Here is a 485-residue protein sequence, read N- to C-terminus: Adenosylhomocysteinase (485 aa).

Thr60, Asp146, and Glu208 together coordinate substrate. 209 to 211 contributes to the NAD(+) binding site; that stretch reads TTT. Substrate-binding residues include Lys238 and Asp242. NAD(+) contacts are provided by residues Asn243, 272–277, Glu295, Asn330, 351–353, and Asn399; these read GYGDVG and IGH.

This sequence belongs to the adenosylhomocysteinase family. Requires NAD(+) as cofactor.

The protein localises to the cytoplasm. It carries out the reaction S-adenosyl-L-homocysteine + H2O = L-homocysteine + adenosine. It functions in the pathway amino-acid biosynthesis; L-homocysteine biosynthesis; L-homocysteine from S-adenosyl-L-homocysteine: step 1/1. May play a key role in the regulation of the intracellular concentration of adenosylhomocysteine. The polypeptide is Adenosylhomocysteinase (Streptomyces coelicolor (strain ATCC BAA-471 / A3(2) / M145)).